We begin with the raw amino-acid sequence, 423 residues long: Probable sucrose-phosphatase 3b (423 aa).

It belongs to the sucrose phosphatase family. In terms of assembly, homodimer. It depends on Mg(2+) as a cofactor.

The catalysed reaction is sucrose 6(F)-phosphate + H2O = sucrose + phosphate. It functions in the pathway glycan biosynthesis; sucrose biosynthesis; sucrose from D-fructose 6-phosphate and UDP-alpha-D-glucose: step 2/2. Its function is as follows. Catalyzes the final step of sucrose synthesis. The chain is Probable sucrose-phosphatase 3b (SPP3B) from Arabidopsis thaliana (Mouse-ear cress).